A 574-amino-acid polypeptide reads, in one-letter code: Golgin subfamily A member 6-like protein 4 (574 aa).

Residues 1–11 (MWPQPRFPPHP) show a composition bias toward pro residues. Disordered stretches follow at residues 1–77 (MWPQ…YGEG) and 491–552 (KELK…AAGG). Residues 51-62 (NGSSPDTATSGG) are compositionally biased toward polar residues. Positions 157–496 (SKVEQLQDET…EQQVKELKKS (340 aa)) form a coiled coil. Residues 491 to 504 (KELKKSGGAEEPRG) show a composition bias toward basic and acidic residues. A compositionally biased stretch (low complexity) spans 508–523 (AAAARPVAGAPVPQGA).

This sequence belongs to the GOLGA6 family.

The protein is Golgin subfamily A member 6-like protein 4 (GOLGA6L4) of Homo sapiens (Human).